A 394-amino-acid polypeptide reads, in one-letter code: 4-hydroxyphenylpyruvate dioxygenase (394 aa).

VOC domains lie at 27–161 (GYDH…LIER) and 193–351 (HIDH…LFTK). Fe cation is bound by residues His-196, His-279, and Glu-362.

This sequence belongs to the 4HPPD family. Requires Fe cation as cofactor.

It catalyses the reaction 3-(4-hydroxyphenyl)pyruvate + O2 = homogentisate + CO2. It participates in amino-acid degradation; L-phenylalanine degradation; acetoacetate and fumarate from L-phenylalanine: step 3/6. In Yarrowia lipolytica (strain CLIB 122 / E 150) (Yeast), this protein is 4-hydroxyphenylpyruvate dioxygenase.